The chain runs to 542 residues: Cytochrome P450 monooxygenase sdnH (542 aa).

A helical membrane pass occupies residues 25–45 (LYVAGGILGAFTVYSIILVVY). A disordered region spans residues 141-160 (IIPPRGLGQEDSIGSTRSHD). Residues 340-360 (FMGAGTYPTAATLIFVAYYIL) form a helical membrane-spanning segment. Residue C483 coordinates heme. N506 carries an N-linked (GlcNAc...) asparagine glycan.

This sequence belongs to the cytochrome P450 family. Heme serves as cofactor.

It is found in the membrane. It participates in antibiotic biosynthesis. Its function is as follows. Cytochrome P450 monooxygenase; part of the gene cluster that mediates the biosynthesis of sordarin and hypoxysordarin, glycoside antibiotics with a unique tetracyclic diterpene aglycone structure. First, the geranylgeranyl diphosphate synthase sdnC constructs GGDP from farnesyl diphosphate and isopentenyl diphosphate. The diterpene cyclase sdnA then catalyzes the cyclization of GGDP to afford cycloaraneosene. Cycloaraneosene is then hydroxylated four times by the putative cytochrome P450 monooxygenases sdnB, sdnE, sdnF and sdnH to give a hydroxylated cycloaraneosene derivative such as cycloaraneosene-8,9,13,19-tetraol. Although the order of the hydroxylations is unclear, at least C8, C9 and C13 of the cycloaraneosene skeleton are hydroxylated before the sordaricin formation. Dehydration of the 13-hydroxy group of the hydroxylated cycloaraneosene derivative might be catalyzed by an unassigned hypothetical protein such as sdnG and sdnP to construct the cyclopentadiene moiety. The FAD-dependent oxidoreductase sdnN is proposed to catalyze the oxidation at C9 of the hydroxylated cycloaraneosene derivative and also catalyze the Baeyer-Villiger oxidation to give the lactone intermediate. The presumed lactone intermediate would be hydrolyzed to give an acrolein moiety and a carboxylate moiety. Then, [4+2]cycloaddition would occur between the acrolein moiety and the cyclopentadiene moiety to give sordaricin. SdnN might also be involved in the [4+2]cycloaddition after the hypothesized oxidation to accommodate the oxidized product and prompt the [4+2]cycloaddition. GDP-6-deoxy-D-altrose may be biosynthesized from GDP-D-mannose by the putative GDP-mannose-4,6-dehydratase sdnI and the short-chain dehydrogenase sdnK. The glycosyltransferase sdnJ catalyzes the attachment of 6-deoxy-D-altrose onto the 19-hydroxy group of sordaricin to give 4'-O-demethylsordarin. The methyltransferase sdnD would complete the biosynthesis of sordarin. Sordarin can be further modified into hypoxysordarin. The unique acyl chain at the 3'-hydroxy group of hypoxysordarin would be constructed by an iterative type I PKS sdnO and the trans-acting polyketide methyltransferase sdnL. SdnL would be responsible for the introduction of an alpha-methyl group of the polyketide chain. Alternatively, the beta-lactamase-like protein sdnR might be responsible for the cleavage and transfer of the polyketide chain from the PKS sdnO to sordarin. Two putative cytochrome P450 monooxygenases, sdnQ and sdnT, might catalyze the epoxidations of the polyketide chain to complete the biosynthesis of hypoxysordarin. Transcriptional regulators sdnM and sdnS are presumably encoded for the transcriptional regulation of the expression of the sdn gene cluster. This Sordaria araneosa (Pleurage araneosa) protein is Cytochrome P450 monooxygenase sdnH.